Reading from the N-terminus, the 597-residue chain is Kelch-like protein 21 (597 aa).

The BTB domain maps to 35-103; that stretch reads LDVTLEAAGG…SYTGRVAVSG (69 aa). Residues 138-239 form the BACK domain; the sequence is CLDMQDFAEA…RRFYLLAHVE (102 aa). Kelch repeat units follow at residues 287–335, 336–382, 384–422, 423–470, 472–512, and 513–560; these read ILVL…ALGN, DIYV…VLNG, LYVV…ACRG, RLYA…TLNG, MYFV…ALGG, and KLYV…SIFR. Positions 570 to 597 are disordered; that stretch reads GRGFELNSGSSDVDAGHHRLPQNPEELQ.

Component of the BCR(KLHL21) E3 ubiquitin ligase complex, at least composed of CUL3, KLHL21 and RBX1.

It localises to the cytoplasm. The protein resides in the cytoskeleton. It is found in the spindle. The protein operates within protein modification; protein ubiquitination. Substrate-specific adapter of BCR (BTB-CUL3-RBX1) E3 ubiquitin-protein ligase complex required for efficient chromosome alignment and cytokinesis. The BCR(KLHL21) E3 ubiquitin ligase complex regulates localization of the chromosomal passenger complex (CPC) from chromosomes to the spindle midzone in anaphase and mediates the ubiquitination of AURKB. Ubiquitination of AURKB by BCR(KLHL21) E3 ubiquitin ligase complex may not lead to its degradation by the proteasome. The polypeptide is Kelch-like protein 21 (Klhl21) (Rattus norvegicus (Rat)).